Consider the following 235-residue polypeptide: Aspartate/glutamate leucyltransferase (235 aa).

The protein belongs to the R-transferase family. Bpt subfamily.

The protein localises to the cytoplasm. It carries out the reaction N-terminal L-glutamyl-[protein] + L-leucyl-tRNA(Leu) = N-terminal L-leucyl-L-glutamyl-[protein] + tRNA(Leu) + H(+). The catalysed reaction is N-terminal L-aspartyl-[protein] + L-leucyl-tRNA(Leu) = N-terminal L-leucyl-L-aspartyl-[protein] + tRNA(Leu) + H(+). In terms of biological role, functions in the N-end rule pathway of protein degradation where it conjugates Leu from its aminoacyl-tRNA to the N-termini of proteins containing an N-terminal aspartate or glutamate. The sequence is that of Aspartate/glutamate leucyltransferase from Pseudomonas syringae pv. tomato (strain ATCC BAA-871 / DC3000).